The primary structure comprises 339 residues: Glucokinase (339 aa).

16–21 contributes to the ATP binding site; the sequence is GDIGGT.

Belongs to the bacterial glucokinase family.

The protein localises to the cytoplasm. The enzyme catalyses D-glucose + ATP = D-glucose 6-phosphate + ADP + H(+). This Pseudomonas paraeruginosa (strain DSM 24068 / PA7) (Pseudomonas aeruginosa (strain PA7)) protein is Glucokinase.